The primary structure comprises 187 residues: Elongation factor P (187 aa).

It belongs to the elongation factor P family.

Its subcellular location is the cytoplasm. Its pathway is protein biosynthesis; polypeptide chain elongation. Functionally, involved in peptide bond synthesis. Stimulates efficient translation and peptide-bond synthesis on native or reconstituted 70S ribosomes in vitro. Probably functions indirectly by altering the affinity of the ribosome for aminoacyl-tRNA, thus increasing their reactivity as acceptors for peptidyl transferase. The sequence is that of Elongation factor P (efp) from Treponema pallidum (strain Nichols).